We begin with the raw amino-acid sequence, 126 residues long: Glycine cleavage system H protein (126 aa).

Positions 24–106 (TITVGITDHA…YGEGWFFRMK (83 aa)) constitute a Lipoyl-binding domain. N6-lipoyllysine is present on lysine 65.

This sequence belongs to the GcvH family. The glycine cleavage system is composed of four proteins: P, T, L and H. Requires (R)-lipoate as cofactor.

The glycine cleavage system catalyzes the degradation of glycine. The H protein shuttles the methylamine group of glycine from the P protein to the T protein. This Psychrobacter arcticus (strain DSM 17307 / VKM B-2377 / 273-4) protein is Glycine cleavage system H protein.